Reading from the N-terminus, the 247-residue chain is 2,3-bisphosphoglycerate-dependent phosphoglycerate mutase (247 aa).

Substrate contacts are provided by residues 8 to 15 (RHGESTWN), 21 to 22 (TG), Arg-60, 87 to 90 (ERHY), Lys-98, 114 to 115 (RR), and 183 to 184 (GN). The Tele-phosphohistidine intermediate role is filled by His-9. The active-site Proton donor/acceptor is the Glu-87.

This sequence belongs to the phosphoglycerate mutase family. BPG-dependent PGAM subfamily. As to quaternary structure, homodimer.

The enzyme catalyses (2R)-2-phosphoglycerate = (2R)-3-phosphoglycerate. It functions in the pathway carbohydrate degradation; glycolysis; pyruvate from D-glyceraldehyde 3-phosphate: step 3/5. Catalyzes the interconversion of 2-phosphoglycerate and 3-phosphoglycerate. In Albidiferax ferrireducens (strain ATCC BAA-621 / DSM 15236 / T118) (Rhodoferax ferrireducens), this protein is 2,3-bisphosphoglycerate-dependent phosphoglycerate mutase.